We begin with the raw amino-acid sequence, 532 residues long: CTP synthase (532 aa).

An amidoligase domain region spans residues Met-1–Leu-267. CTP is bound at residue Ser-13. Residue Ser-13 coordinates UTP. Ser-14 to Ile-19 contacts ATP. Residue Tyr-54 participates in L-glutamine binding. Asp-71 is an ATP binding site. Mg(2+) contacts are provided by Asp-71 and Glu-141. CTP-binding positions include Asp-148 to Glu-150, Lys-188 to Gln-193, and Lys-224. UTP-binding positions include Lys-188–Gln-193 and Lys-224. In terms of domain architecture, Glutamine amidotransferase type-1 spans Arg-292–Lys-532. L-glutamine is bound at residue Gly-354. The Nucleophile; for glutamine hydrolysis role is filled by Cys-381. L-glutamine is bound by residues Leu-382 to Gln-385, Glu-405, and Arg-462. Active-site residues include His-507 and Glu-509.

It belongs to the CTP synthase family. Homotetramer.

It catalyses the reaction UTP + L-glutamine + ATP + H2O = CTP + L-glutamate + ADP + phosphate + 2 H(+). The enzyme catalyses L-glutamine + H2O = L-glutamate + NH4(+). The catalysed reaction is UTP + NH4(+) + ATP = CTP + ADP + phosphate + 2 H(+). It functions in the pathway pyrimidine metabolism; CTP biosynthesis via de novo pathway; CTP from UDP: step 2/2. Its activity is regulated as follows. Allosterically activated by GTP, when glutamine is the substrate; GTP has no effect on the reaction when ammonia is the substrate. The allosteric effector GTP functions by stabilizing the protein conformation that binds the tetrahedral intermediate(s) formed during glutamine hydrolysis. Inhibited by the product CTP, via allosteric rather than competitive inhibition. In terms of biological role, catalyzes the ATP-dependent amination of UTP to CTP with either L-glutamine or ammonia as the source of nitrogen. Regulates intracellular CTP levels through interactions with the four ribonucleotide triphosphates. The chain is CTP synthase from Listeria monocytogenes serotype 4b (strain F2365).